Here is a 168-residue protein sequence, read N- to C-terminus: uncharacterized protein (168 aa).

The next 5 membrane-spanning stretches (helical) occupy residues 15–33, 41–57, 73–93, 108–128, and 129–149; these read YLTV…LAVL, LSLT…ASSL, WIGL…GALL, VPLL…WVLN, and NLIA…VLAI.

Its subcellular location is the cell membrane. This is an uncharacterized protein from Haemophilus influenzae (strain ATCC 51907 / DSM 11121 / KW20 / Rd).